The sequence spans 41 residues: Large ribosomal subunit protein bL36 (41 aa).

Belongs to the bacterial ribosomal protein bL36 family.

The sequence is that of Large ribosomal subunit protein bL36 from Neisseria gonorrhoeae (strain ATCC 700825 / FA 1090).